We begin with the raw amino-acid sequence, 101 residues long: Small ribosomal subunit protein uS14 (101 aa).

Belongs to the universal ribosomal protein uS14 family. As to quaternary structure, part of the 30S ribosomal subunit. Contacts proteins S3 and S10.

In terms of biological role, binds 16S rRNA, required for the assembly of 30S particles and may also be responsible for determining the conformation of the 16S rRNA at the A site. The polypeptide is Small ribosomal subunit protein uS14 (Shewanella baltica (strain OS155 / ATCC BAA-1091)).